Reading from the N-terminus, the 86-residue chain is Bacteriocin thailandicin (86 aa).

Residues 23–86 constitute a cross-link (cyclopeptide (Leu-Trp)); the sequence is LTANLGISSY…KYGAKYSAAW (64 aa).

The protein localises to the secreted. Its function is as follows. Cyclopeptide antibiotic with bacteriolytic activity against the Gram-positive bacteria S.aureus and S.thermophilus, and lower activity against the Gram-negative bacteria E.coli and P.aeruginosa. The protein is Bacteriocin thailandicin of Enterococcus thailandicus.